The following is a 190-amino-acid chain: Segregation and condensation protein B (190 aa).

It belongs to the ScpB family. In terms of assembly, homodimer. Homodimerization may be required to stabilize the binding of ScpA to the Smc head domains. Component of a cohesin-like complex composed of ScpA, ScpB and the Smc homodimer, in which ScpA and ScpB bind to the head domain of Smc. The presence of the three proteins is required for the association of the complex with DNA.

It localises to the cytoplasm. In terms of biological role, participates in chromosomal partition during cell division. May act via the formation of a condensin-like complex containing Smc and ScpA that pull DNA away from mid-cell into both cell halves. This Bacillus cereus (strain ATCC 10987 / NRS 248) protein is Segregation and condensation protein B.